Reading from the N-terminus, the 1142-residue chain is MAENKGGGEAESGGGGSGSAPVTAGAAGPTAQEAEPPLAAVLVEEEEEEGGRAGAEGGAAGPDDGGVAAASSSSAPAASVPAASVGSAVPGGAASTPAPAAAPAPAPAPAPAPAPAPAPAPAPGSSSGPPLGPPASLLDTCAVCQQSLQSRREAEPKLLPCLHSFCLRCLPEPERQLSVPIPGGSNGDVQQVGVIRCPVCRQECRQIDLVDNYFVKDTSEAPSSSDEKSEQVCTSCEDNASAVGFCVECGEWLCKTCIEAHQRVKFTKDHLIRKKEDVSESVGTSGQRPVFCPVHKQEQLKLFCETCDRLTCRDCQLLEHKEHRYQFLEEAFQNQKGAIENLLAKLLEKKNYVHFAATQVQNRIKEVNETNKRVEQEIKVAIFTLINEINKKGKSLLQQLENVTKERQMKLLQQQNDITGLSRQVKHVMNFTNWAIASGSSTALLYSKRLITFQLRHILKARCDPVPAANGAIRFHCDPTFWAKNVVNLGNLVIESKPAPGYTPNVVVGQVPPGTNHISKTPGQINLAQLRLQHMQQQVYAQKHQQLQQMRLQQPPAPIPTTTATTQQHPRQAAPQMLQQQPPRLISVQTMQRGNMNCGAFQAHQMRLAQNAARIPGIPRHSAPQYSMMQPHLQRQHSNPGHAGPFPVVSAHNPINPTSPTTATMANANRGPTSPSVTAIELIPSVTNPENLPSLPDIPPIQLEDAGSSSLDNLLSRYISGSHLPPQPTSTMNPSPGPSALSPGSSGLSNSHTPVRPPSTSSTGSRGSCGSSGRTAEKSAHSFKSDQVKVKQEPGTEEEICSFSGAVKQEKTEDGRRSACMLSSPESSLTPPLSTNLHLESELDTLTGLENHVKTEPTDISESCKQSGLSNLVNGKSPIRNLMHRSARIGGDGNSKDDDPNEDWCAVCQNGGDLLCCEKCPKVFHLTCHVPTLLSFPSGDWICTFCRDIGKPEVEYDCDNMQHSKKGKTAQGLSPVDQRKCERLLLYLYCHELSIEFQEPVPVSIPNYYKIIKKPMDLSTVKKKLQKKHSQHYQIPDDFVADVRLIFKNCERFNEMMKVVQVYADTQEINLKGDSEVAKAGKAVALYFEDKLSEIYSDRTFTPLPEFEQDEDDGEVTEDSDEDFIQPRRKRLKSDERPVHIK.

Residues 1–18 (MAENKGGGEAESGGGGSG) show a composition bias toward gly residues. Residues 1-132 (MAENKGGGEA…PGSSSGPPLG (132 aa)) are disordered. The interval 1 to 163 (MAENKGGGEA…AEPKLLPCLH (163 aa)) is necessary for E3 ubiquitin-protein ligase activity and repression of SMAD4 signaling and transcriptional repression. The span at 19–42 (SAPVTAGAAGPTAQEAEPPLAAVL) shows a compositional bias: low complexity. The segment covering 52 to 64 (RAGAEGGAAGPDD) has biased composition (gly residues). The segment covering 65 to 99 (GGVAAASSSSAPAASVPAASVGSAVPGGAASTPAP) has biased composition (low complexity). The span at 100-122 (AAAPAPAPAPAPAPAPAPAPAPA) shows a compositional bias: pro residues. Residues 141 to 201 (CAVCQQSLQS…VGVIRCPVCR (61 aa)) form an RING-type zinc finger. 2 consecutive B box-type zinc fingers follow at residues 228–275 (KSEQ…IRKK) and 287–328 (QRPV…YQFL). Zn(2+) is bound by residues C233, C236, C257, H261, C292, H295, C315, and H320. Positions 315 to 417 (CQLLEHKEHR…QMKLLQQQND (103 aa)) are necessary for oligomerization. Residues 315 to 417 (CQLLEHKEHR…QMKLLQQQND (103 aa)) adopt a coiled-coil conformation. Residues K345, K350, K497, and K520 each participate in a glycyl lysine isopeptide (Lys-Gly) (interchain with G-Cter in SUMO2) cross-link. Residue R531 is modified to Asymmetric dimethylarginine; alternate. R531 is subject to Omega-N-methylarginine; alternate. Residue K543 forms a Glycyl lysine isopeptide (Lys-Gly) (interchain with G-Cter in SUMO2) linkage. R551 bears the Omega-N-methylarginine mark. The residue at position 593 (R593) is an Asymmetric dimethylarginine. R607 carries the asymmetric dimethylarginine; alternate modification. The residue at position 607 (R607) is an Omega-N-methylarginine; alternate. R614 and R620 each carry asymmetric dimethylarginine. Disordered regions lie at residues 657–676 (PTSPTTATMANANRGPTSPS), 688–707 (NPENLPSLPDIPPIQLEDAG), and 718–834 (YISG…PPLS). Positions 738 to 774 (PSALSPGSSGLSNSHTPVRPPSTSSTGSRGSCGSSGR) are enriched in low complexity. 2 stretches are compositionally biased toward basic and acidic residues: residues 775–794 (TAEKSAHSFKSDQVKVKQEP) and 808–817 (KQEKTEDGRR). N6-acetyllysine; alternate occurs at positions 778 and 784. Residues K778 and K784 each participate in a glycyl lysine isopeptide (Lys-Gly) (interchain with G-Cter in SUMO2); alternate cross-link. K789 is covalently cross-linked (Glycyl lysine isopeptide (Lys-Gly) (interchain with G-Cter in SUMO2)). Glycyl lysine isopeptide (Lys-Gly) (interchain with G-Cter in SUMO2); alternate cross-links involve residues K791 and K808. Glycyl lysine isopeptide (Lys-Gly) (interchain with G-Cter in SUMO1); alternate cross-links involve residues K791 and K808. K808 is subject to N6-acetyllysine; alternate. A Glycyl lysine isopeptide (Lys-Gly) (interchain with G-Cter in SUMO2) cross-link involves residue K811. S818 carries the post-translational modification Phosphoserine. Residues 822 to 834 (LSSPESSLTPPLS) show a composition bias toward low complexity. Residue T830 is modified to Phosphothreonine. Residue K876 forms a Glycyl lysine isopeptide (Lys-Gly) (interchain with G-Cter in SUMO2) linkage. A Phosphoserine modification is found at S877. The PHD-type zinc-finger motif lies at 902–949 (EDWCAVCQNGGDLLCCEKCPKVFHLTCHVPTLLSFPSGDWICTFCRDI). The residue at position 966 (K966) is an N6-acetyllysine. K968 is subject to N6-acetyllysine; alternate. A Glycyl lysine isopeptide (Lys-Gly) (interchain with G-Cter in SUMO2); alternate cross-link involves residue K968. Residues 972–1095 (GLSPVDQRKC…LYFEDKLSEI (124 aa)) enclose the Bromo domain. Glycyl lysine isopeptide (Lys-Gly) (interchain with G-Cter in SUMO2) cross-links involve residues K1022 and K1058. Phosphothreonine is present on T1066. Residue K1072 forms a Glycyl lysine isopeptide (Lys-Gly) (interchain with G-Cter in SUMO2) linkage. A disordered region spans residues 1103–1142 (PLPEFEQDEDDGEVTEDSDEDFIQPRRKRLKSDERPVHIK). Positions 1107–1124 (FEQDEDDGEVTEDSDEDF) are enriched in acidic residues. T1117 carries the phosphothreonine modification. S1120 is modified (phosphoserine). A Glycyl lysine isopeptide (Lys-Gly) (interchain with G-Cter in SUMO2) cross-link involves residue K1133. Positions 1133–1142 (KSDERPVHIK) are enriched in basic and acidic residues. Residue S1134 is modified to Phosphoserine.

This sequence belongs to the TRIM/RBCC family. As to quaternary structure, homooligomer and heterooligomer with TRIM24 and TRIM28 family members. Interacts with SMAD4 in unstimulated cells. Found in a complex with SMAD2 and SMAD3 upon addition of TGF-beta. Interacts with SMAD2 and SMAD3. Interacts with SMAD4 under basal and induced conditions and, upon TGF-beta signaling, with activated SMAD2. Forms a ternary complex with SMAD4 and SMAD2 upon TGF-beta signaling. Post-translationally, sumoylated with SUMO1. In terms of tissue distribution, ubiquitous with high level in testis.

Its subcellular location is the nucleus. It catalyses the reaction S-ubiquitinyl-[E2 ubiquitin-conjugating enzyme]-L-cysteine + [acceptor protein]-L-lysine = [E2 ubiquitin-conjugating enzyme]-L-cysteine + N(6)-ubiquitinyl-[acceptor protein]-L-lysine.. Its pathway is protein modification; protein ubiquitination. Functionally, acts as an E3 ubiquitin-protein ligase. Promotes SMAD4 ubiquitination, nuclear exclusion and degradation via the ubiquitin proteasome pathway. May act as a transcriptional repressor. Inhibits the transcriptional response to TGF-beta/BMP signaling cascade. Plays a role in the control of cell proliferation. Its association with SMAD2 and SMAD3 stimulates erythroid differentiation of hematopoietic stem/progenitor. Monoubiquitinates SMAD4 and acts as an inhibitor of SMAD4-dependent TGF-beta/BMP signaling cascade (Monoubiquitination of SMAD4 hampers its ability to form a stable complex with activated SMAD2/3 resulting in inhibition of TGF-beta/BMP signaling cascade). In Mus musculus (Mouse), this protein is E3 ubiquitin-protein ligase TRIM33 (Trim33).